Here is a 179-residue protein sequence, read N- to C-terminus: MAIEILRLGHRGERDKRISTHVALTSRALGAEKIIFTEEDKHVKESVERIVEAWGGEFKFEVVKSWRSYAKRFKDNGIVVHLTMYGENINKIMTEIREDISKTNKNLLLIIGAEKVPREAYDLADYNLSVGNQPHSEVAALAIFLDRFTEGKTLYSEYDDAKIKVTPSKSEKCVFVEKD.

S-adenosyl-L-methionine contacts are provided by residues Leu-82, 112–116, and 130–137; these read GAEKV and VGNQPHSE.

Belongs to the aTrm56 family. As to quaternary structure, homodimer.

The protein resides in the cytoplasm. The enzyme catalyses cytidine(56) in tRNA + S-adenosyl-L-methionine = 2'-O-methylcytidine(56) in tRNA + S-adenosyl-L-homocysteine + H(+). Its function is as follows. Specifically catalyzes the AdoMet-dependent 2'-O-ribose methylation of cytidine at position 56 in tRNAs. The protein is tRNA (cytidine(56)-2'-O)-methyltransferase of Methanococcus maripaludis (strain DSM 14266 / JCM 13030 / NBRC 101832 / S2 / LL).